The sequence spans 78 residues: DNA-directed RNA polymerase subunit omega (78 aa).

Belongs to the RNA polymerase subunit omega family. In terms of assembly, in cyanobacteria the RNAP catalytic core is composed of 2 alpha, 1 beta, 1 beta', 1 gamma and 1 omega subunit. When a sigma factor is associated with the core the holoenzyme is formed, which can initiate transcription.

It carries out the reaction RNA(n) + a ribonucleoside 5'-triphosphate = RNA(n+1) + diphosphate. In terms of biological role, promotes RNA polymerase assembly. Latches the N- and C-terminal regions of the beta' subunit thereby facilitating its interaction with the beta and alpha subunits. This chain is DNA-directed RNA polymerase subunit omega, found in Prochlorococcus marinus (strain MIT 9312).